The primary structure comprises 417 residues: Squalene synthase (417 aa).

NADP(+) is bound by residues Arg-52 and Arg-77. The Mg(2+) site is built by Asp-80, Glu-83, and Asp-84. Residue Arg-218 coordinates NADP(+). The helical transmembrane segment at 284 to 304 (SIFNFCAIPQVMAIATLAACY) threads the bilayer. NADP(+)-binding residues include Lys-315 and Arg-317. Residues 384 to 404 (PIYLSFVMLLAALSWQYLSTL) traverse the membrane as a helical segment.

The protein belongs to the phytoene/squalene synthase family. It depends on Mg(2+) as a cofactor.

Its subcellular location is the endoplasmic reticulum membrane. The enzyme catalyses 2 (2E,6E)-farnesyl diphosphate + NADPH + H(+) = squalene + 2 diphosphate + NADP(+). The catalysed reaction is 2 (2E,6E)-farnesyl diphosphate + NADH + H(+) = squalene + 2 diphosphate + NAD(+). It catalyses the reaction presqualene diphosphate + NADH + H(+) = squalene + diphosphate + NAD(+). It carries out the reaction presqualene diphosphate + NADPH + H(+) = squalene + diphosphate + NADP(+). The enzyme catalyses 2 (2E,6E)-farnesyl diphosphate = presqualene diphosphate + diphosphate. It functions in the pathway terpene metabolism; lanosterol biosynthesis; lanosterol from farnesyl diphosphate: step 1/3. In terms of biological role, catalyzes the condensation of 2 farnesyl pyrophosphate (FPP) moieties to form squalene. Proceeds in two distinct steps. In the first half-reaction, two molecules of FPP react to form the stable presqualene diphosphate intermediate (PSQPP), with concomitant release of a proton and a molecule of inorganic diphosphate. In the second half-reaction, PSQPP undergoes heterolysis, isomerization, and reduction with NADPH or NADH to form squalene. It is the first committed enzyme of the sterol biosynthesis pathway. The chain is Squalene synthase (FDFT1) from Bos taurus (Bovine).